A 114-amino-acid chain; its full sequence is UPF0145 protein YG5714_0873 (114 aa).

The protein belongs to the UPF0145 family.

This Saccharolobus islandicus (strain Y.G.57.14 / Yellowstone #1) (Sulfolobus islandicus) protein is UPF0145 protein YG5714_0873.